Here is a 156-residue protein sequence, read N- to C-terminus: Small ribosomal subunit protein uS7 (156 aa).

This sequence belongs to the universal ribosomal protein uS7 family. As to quaternary structure, part of the 30S ribosomal subunit. Contacts proteins S9 and S11.

Its function is as follows. One of the primary rRNA binding proteins, it binds directly to 16S rRNA where it nucleates assembly of the head domain of the 30S subunit. Is located at the subunit interface close to the decoding center, probably blocks exit of the E-site tRNA. This Levilactobacillus brevis (strain ATCC 367 / BCRC 12310 / CIP 105137 / JCM 1170 / LMG 11437 / NCIMB 947 / NCTC 947) (Lactobacillus brevis) protein is Small ribosomal subunit protein uS7.